Reading from the N-terminus, the 260-residue chain is uncharacterized protein (260 aa).

This is an uncharacterized protein from Saccharomyces cerevisiae (strain ATCC 204508 / S288c) (Baker's yeast).